Here is a 394-residue protein sequence, read N- to C-terminus: Flap endonuclease 1 (394 aa).

Residues 1–103 (MGIKSLYQII…GELAKRTMRK (103 aa)) are N-domain. Asp34 provides a ligand contact to Mg(2+). Arg69 is a DNA binding site. Residue Asp85 coordinates Mg(2+). Residues 102 to 123 (RKAEAQEAAEEAKETGTAEDVE) are disordered. An I-domain region spans residues 121 to 252 (DVEKFSRRTV…NTALKMIRDH (132 aa)). Mg(2+) contacts are provided by Glu157, Glu159, Asp178, and Asp180. Glu157 lines the DNA pocket. Residues Gly230 and Asp232 each contribute to the DNA site. Position 232 (Asp232) interacts with Mg(2+). The segment at 340–348 (QQSRLEGFF) is interaction with PCNA. A disordered region spans residues 349 to 394 (KPVAKTEQQKATAKRKAEEKAELAKKKKKEDAKAKRAMGAKPRGAR). Basic and acidic residues predominate over residues 363 to 382 (RKAEEKAELAKKKKKEDAKA). Residues 383-394 (KRAMGAKPRGAR) show a composition bias toward basic residues.

The protein belongs to the XPG/RAD2 endonuclease family. FEN1 subfamily. In terms of assembly, interacts with PCNA. Three molecules of FEN1 bind to one PCNA trimer with each molecule binding to one PCNA monomer. PCNA stimulates the nuclease activity without altering cleavage specificity. The cofactor is Mg(2+). Post-translationally, phosphorylated. Phosphorylation upon DNA damage induces relocalization to the nuclear plasma.

The protein resides in the nucleus. It is found in the nucleolus. The protein localises to the nucleoplasm. Its subcellular location is the mitochondrion. In terms of biological role, structure-specific nuclease with 5'-flap endonuclease and 5'-3' exonuclease activities involved in DNA replication and repair. During DNA replication, cleaves the 5'-overhanging flap structure that is generated by displacement synthesis when DNA polymerase encounters the 5'-end of a downstream Okazaki fragment. It enters the flap from the 5'-end and then tracks to cleave the flap base, leaving a nick for ligation. Also involved in the long patch base excision repair (LP-BER) pathway, by cleaving within the apurinic/apyrimidinic (AP) site-terminated flap. Acts as a genome stabilization factor that prevents flaps from equilibrating into structures that lead to duplications and deletions. Also possesses 5'-3' exonuclease activity on nicked or gapped double-stranded DNA, and exhibits RNase H activity. Also involved in replication and repair of rDNA and in repairing mitochondrial DNA. The chain is Flap endonuclease 1 from Arthroderma otae (strain ATCC MYA-4605 / CBS 113480) (Microsporum canis).